Here is a 109-residue protein sequence, read N- to C-terminus: uncharacterized protein (109 aa).

To A.fulgidus AF1885.

This is an uncharacterized protein from Methanocaldococcus jannaschii (strain ATCC 43067 / DSM 2661 / JAL-1 / JCM 10045 / NBRC 100440) (Methanococcus jannaschii).